Reading from the N-terminus, the 535-residue chain is Glucose-6-phosphate isomerase (535 aa).

The active-site Proton donor is the glutamate 359. Residues histidine 390 and lysine 505 contribute to the active site.

Belongs to the GPI family.

It is found in the cytoplasm. The catalysed reaction is alpha-D-glucose 6-phosphate = beta-D-fructose 6-phosphate. It functions in the pathway carbohydrate biosynthesis; gluconeogenesis. The protein operates within carbohydrate degradation; glycolysis; D-glyceraldehyde 3-phosphate and glycerone phosphate from D-glucose: step 2/4. Catalyzes the reversible isomerization of glucose-6-phosphate to fructose-6-phosphate. The sequence is that of Glucose-6-phosphate isomerase from Treponema pallidum (strain Nichols).